The primary structure comprises 592 residues: MRKPADEHHFTMETSGMHLVGFWLHVLLLFQLSGLGDSASKDIVCEPITVPMCKGIGYNHTYMPNQFNHDNQDEVGLEVHQFWPLVRIHCSPDLLFFLCSMYTPICLQDYKKPLPPCRSVCERAKRGCSPLMIQYGFEWPERMSCEQLPMLGDTDRLCMDRNSSETTTLSPPFPKPTPKGTPRHRATAKSAPPQKCDRECHCRGPLVPIKKEAHPLHNRVNTGSLPNCALPCHQPYFSQDERTFTTFWIGLWSVLCFVSTFTTVATFLIDMERFKYPERPIIFLAACYLFVSLGYIVRLLAGHERVACEGTGDQQHILYDTTGPALCTLVFLLIYFFGMASSIWWVVLSFTWFLAAGMKWGNEAIAGYSQYFHLAAWLVPSVKSIAVLALSSVDGDPVAGICYVGNQSLEGLRGFVLAPLVVYLFTGSLFLLAGFVSLFRIRSVIKQGGTKTDKLEKLMIRIGLFTVLYTVPATIVVACLVYEQHYRPSWERALACSCPSERQRLGMGPDYAVFMLKYFMCLVVGITSGVWIWSGKTLESWRRFIARYVPCRTRKPPVSASSMYSEASTALTARAGTAPTGTYHKSAPSSHV.

The first 38 residues, 1–38 (MRKPADEHHFTMETSGMHLVGFWLHVLLLFQLSGLGDS), serve as a signal peptide directing secretion. Residues 39–248 (ASKDIVCEPI…QDERTFTTFW (210 aa)) lie on the Extracellular side of the membrane. One can recognise an FZ domain in the interval 40–161 (SKDIVCEPIT…GDTDRLCMDR (122 aa)). 5 disulfides stabilise this stretch: Cys45–Cys106, Cys53–Cys99, Cys90–Cys128, Cys117–Cys158, and Cys121–Cys145. Positions 162 to 192 (NSSETTTLSPPFPKPTPKGTPRHRATAKSAP) are disordered. The helical transmembrane segment at 249–269 (IGLWSVLCFVSTFTTVATFLI) threads the bilayer. Topologically, residues 270 to 280 (DMERFKYPERP) are cytoplasmic. Residues 281–301 (IIFLAACYLFVSLGYIVRLLA) form a helical membrane-spanning segment. The Extracellular portion of the chain corresponds to 302–327 (GHERVACEGTGDQQHILYDTTGPALC). Residues 328 to 348 (TLVFLLIYFFGMASSIWWVVL) traverse the membrane as a helical segment. Over 349–370 (SFTWFLAAGMKWGNEAIAGYSQ) the chain is Cytoplasmic. The chain crosses the membrane as a helical span at residues 371-391 (YFHLAAWLVPSVKSIAVLALS). Residues 392-414 (SVDGDPVAGICYVGNQSLEGLRG) lie on the Extracellular side of the membrane. A helical membrane pass occupies residues 415-435 (FVLAPLVVYLFTGSLFLLAGF). Residues 436 to 461 (VSLFRIRSVIKQGGTKTDKLEKLMIR) lie on the Cytoplasmic side of the membrane. The helical transmembrane segment at 462–482 (IGLFTVLYTVPATIVVACLVY) threads the bilayer. Topologically, residues 483–512 (EQHYRPSWERALACSCPSERQRLGMGPDYA) are extracellular. Residues 513–533 (VFMLKYFMCLVVGITSGVWIW) form a helical membrane-spanning segment. Residues 534–592 (SGKTLESWRRFIARYVPCRTRKPPVSASSMYSEASTALTARAGTAPTGTYHKSAPSSHV) lie on the Cytoplasmic side of the membrane.

Belongs to the G-protein coupled receptor Fz/Smo family.

Its subcellular location is the cell membrane. It is found in the golgi apparatus membrane. The protein localises to the synapse. The protein resides in the perikaryon. It localises to the cell projection. Its subcellular location is the dendrite. It is found in the axon. Receptor for Wnt proteins. Following binding, activates the canonical Wnt/beta-catenin signaling pathway. Also activates wnt non-canonical signaling. In neurons, activation of the Wnt pathway promotes formation of synapses. May be involved in transduction and intercellular transmission of polarity information during tissue morphogenesis and/or in differentiated tissues. Plays a role in early eye development, possibly through wnt non-canonical signaling. As a receptor for wnt11, promotes eye formation, at least partially, by antagonizing the Wnt/beta-catenin pathway. In addition, promotes coherence of eye field cells, potentially contributing to the coordinated morphogenetic behaviors of cells in the nascent eye field. In Danio rerio (Zebrafish), this protein is Frizzled-5 (fzd5).